Consider the following 318-residue polypeptide: Nitrate reductase [NADH] (318 aa).

In terms of domain architecture, Cytochrome b5 heme-binding spans 216-291 (AKSFTMAEVE…LLEYYIGELA (76 aa)). 2 residues coordinate heme: His251 and His274.

The protein belongs to the nitrate reductase family. Homodimer. It depends on FAD as a cofactor. Heme is required as a cofactor. Mo-molybdopterin serves as cofactor.

The enzyme catalyses nitrite + NAD(+) + H2O = nitrate + NADH + H(+). Nitrate reductase is a key enzyme involved in the first step of nitrate assimilation in plants, fungi and bacteria. This chain is Nitrate reductase [NADH], found in Chlorella vulgaris (Green alga).